The chain runs to 305 residues: tRNA pseudouridine synthase B (305 aa).

The Nucleophile role is filled by D39.

Belongs to the pseudouridine synthase TruB family. Type 1 subfamily.

The catalysed reaction is uridine(55) in tRNA = pseudouridine(55) in tRNA. Functionally, responsible for synthesis of pseudouridine from uracil-55 in the psi GC loop of transfer RNAs. The polypeptide is tRNA pseudouridine synthase B (Staphylococcus aureus (strain Newman)).